Reading from the N-terminus, the 102-residue chain is Small ribosomal subunit protein eS24 (102 aa).

Residues 70–102 (VYDSPAQAAEVEHDHMLERNKIGADDADAEEAE) form a disordered region. Basic and acidic residues predominate over residues 79–93 (EVEHDHMLERNKIGA).

This sequence belongs to the eukaryotic ribosomal protein eS24 family.

This is Small ribosomal subunit protein eS24 from Halobacterium salinarum (strain ATCC 29341 / DSM 671 / R1).